Reading from the N-terminus, the 121-residue chain is Small ribosomal subunit protein uS13 (121 aa).

The disordered stretch occupies residues 94-121 (GLPVRGQNTKNNARTRKGPRRTVANKKK). Residues 106–121 (ARTRKGPRRTVANKKK) are compositionally biased toward basic residues.

The protein belongs to the universal ribosomal protein uS13 family. Part of the 30S ribosomal subunit. Forms a loose heterodimer with protein S19. Forms two bridges to the 50S subunit in the 70S ribosome.

In terms of biological role, located at the top of the head of the 30S subunit, it contacts several helices of the 16S rRNA. In the 70S ribosome it contacts the 23S rRNA (bridge B1a) and protein L5 of the 50S subunit (bridge B1b), connecting the 2 subunits; these bridges are implicated in subunit movement. Contacts the tRNAs in the A and P-sites. This Geobacillus kaustophilus (strain HTA426) protein is Small ribosomal subunit protein uS13.